We begin with the raw amino-acid sequence, 257 residues long: 3-methyl-2-oxobutanoate hydroxymethyltransferase (257 aa).

Asp42 and Asp86 together coordinate Mg(2+). 3-methyl-2-oxobutanoate contacts are provided by residues 42 to 43 (DS), Asp86, and Lys116. Residue Glu118 participates in Mg(2+) binding. Residue Glu185 is the Proton acceptor of the active site.

It belongs to the PanB family. Homodecamer; pentamer of dimers. The cofactor is Mg(2+).

Its subcellular location is the cytoplasm. It catalyses the reaction 3-methyl-2-oxobutanoate + (6R)-5,10-methylene-5,6,7,8-tetrahydrofolate + H2O = 2-dehydropantoate + (6S)-5,6,7,8-tetrahydrofolate. It functions in the pathway cofactor biosynthesis; (R)-pantothenate biosynthesis; (R)-pantoate from 3-methyl-2-oxobutanoate: step 1/2. Functionally, catalyzes the reversible reaction in which hydroxymethyl group from 5,10-methylenetetrahydrofolate is transferred onto alpha-ketoisovalerate to form ketopantoate. The chain is 3-methyl-2-oxobutanoate hydroxymethyltransferase from Prochlorococcus marinus (strain MIT 9215).